Here is a 462-residue protein sequence, read N- to C-terminus: Cleavage and polyadenylation specificity factor subunit 7 (462 aa).

Disordered regions lie at residues Val-34–Pro-68 and Thr-161–Leu-213. Residues Glu-50–Lys-62 are compositionally biased toward pro residues. The 81-residue stretch at Ala-82–Arg-162 folds into the RRM domain. Over residues His-181–Asp-190 the composition is skewed to basic and acidic residues. Phosphothreonine is present on Thr-194. Ser-196 carries the phosphoserine modification. Residue Lys-345 forms a Glycyl lysine isopeptide (Lys-Gly) (interchain with G-Cter in SUMO2) linkage. The interval Ser-400–His-462 is disordered. Residues Ser-404 and Ser-414 each carry the phosphoserine modification. An arg/Ser-rich domain region spans residues Arg-409–Arg-460. Composition is skewed to basic and acidic residues over residues Glu-416 to Ser-425 and Leu-432 to His-462.

Belongs to the RRM CPSF6/7 family. Component of the cleavage factor Im (CFIm) complex which is a heterotetramer composed of two subunits of NUDT21/CPSF5 and two subunits of CPSF6 or CPSF7 or a heterodimer of CPSF6 and CPSF7. The cleavage factor Im (CFIm) complex associates with the CPSF and CSTF complexes to promote the assembly of the core mRNA 3'-processing machinery. Interacts with NUDT21/CPSF5. Interacts (via Arg/Ser-rich domain) with FIP1L1 (preferentially via unphosphorylated form and Arg/Glu/Asp-rich region); this interaction mediates, at least in part, the interaction between the CFIm and CPSF complexes and may be inhibited by CPSF7 hyper-phosphorylation. Phosphorylated. In terms of processing, asymmetrically dimethylated on arginine residues by PRMT1.

Its subcellular location is the nucleus. It is found in the cytoplasm. Functionally, component of the cleavage factor Im (CFIm) complex that functions as an activator of the pre-mRNA 3'-end cleavage and polyadenylation processing required for the maturation of pre-mRNA into functional mRNAs. CFIm contributes to the recruitment of multiprotein complexes on specific sequences on the pre-mRNA 3'-end, so called cleavage and polyadenylation signals (pA signals). Most pre-mRNAs contain multiple pA signals, resulting in alternative cleavage and polyadenylation (APA) producing mRNAs with variable 3'-end formation. The CFIm complex acts as a key regulator of cleavage and polyadenylation site choice during APA through its binding to 5'-UGUA-3' elements localized in the 3'-untranslated region (UTR) for a huge number of pre-mRNAs. CPSF7 activates directly the mRNA 3'-processing machinery. Binds to pA signals in RNA substrates. The sequence is that of Cleavage and polyadenylation specificity factor subunit 7 from Rattus norvegicus (Rat).